A 154-amino-acid chain; its full sequence is UPF0178 protein Gbem_2221 (154 aa).

This sequence belongs to the UPF0178 family.

In Citrifermentans bemidjiense (strain ATCC BAA-1014 / DSM 16622 / JCM 12645 / Bem) (Geobacter bemidjiensis), this protein is UPF0178 protein Gbem_2221.